The chain runs to 123 residues: uncharacterized protein (123 aa).

The signal sequence occupies residues 1 to 19; the sequence is MKIKYFFIPLFSSAILFSA. Residue cysteine 20 is the site of N-palmitoyl cysteine attachment. The S-diacylglycerol cysteine moiety is linked to residue cysteine 20.

It belongs to the MG439/MG440 family.

Its subcellular location is the cell membrane. This is an uncharacterized protein from Mycoplasma pneumoniae (strain ATCC 29342 / M129 / Subtype 1) (Mycoplasmoides pneumoniae).